The sequence spans 539 residues: CTP synthase (539 aa).

The amidoligase domain stretch occupies residues 1-267; sequence MTKYIFVTGG…DQKVVDFLHI (267 aa). A CTP-binding site is contributed by Ser13. A UTP-binding site is contributed by Ser13. An ATP-binding site is contributed by 14 to 19; sequence SLGKGI. Tyr54 lines the L-glutamine pocket. Residue Asp71 participates in ATP binding. Residues Asp71 and Glu141 each contribute to the Mg(2+) site. CTP contacts are provided by residues 148 to 150, 188 to 193, and Lys224; these read DME and KSKPTQ. Residues 188–193 and Lys224 contribute to the UTP site; that span reads KSKPTQ. Residues 294–537 enclose the Glutamine amidotransferase type-1 domain; sequence KITLVGKYVE…IGAASGLQVD (244 aa). Gly356 is a binding site for L-glutamine. Cys383 acts as the Nucleophile; for glutamine hydrolysis in catalysis. L-glutamine-binding positions include 384 to 387, Glu407, and Arg465; that span reads LGMQ. Residues His510 and Glu512 contribute to the active site.

The protein belongs to the CTP synthase family. In terms of assembly, homotetramer.

The enzyme catalyses UTP + L-glutamine + ATP + H2O = CTP + L-glutamate + ADP + phosphate + 2 H(+). It catalyses the reaction L-glutamine + H2O = L-glutamate + NH4(+). The catalysed reaction is UTP + NH4(+) + ATP = CTP + ADP + phosphate + 2 H(+). It functions in the pathway pyrimidine metabolism; CTP biosynthesis via de novo pathway; CTP from UDP: step 2/2. Its activity is regulated as follows. Allosterically activated by GTP, when glutamine is the substrate; GTP has no effect on the reaction when ammonia is the substrate. The allosteric effector GTP functions by stabilizing the protein conformation that binds the tetrahedral intermediate(s) formed during glutamine hydrolysis. Inhibited by the product CTP, via allosteric rather than competitive inhibition. In terms of biological role, catalyzes the ATP-dependent amination of UTP to CTP with either L-glutamine or ammonia as the source of nitrogen. Regulates intracellular CTP levels through interactions with the four ribonucleotide triphosphates. The sequence is that of CTP synthase from Lactobacillus delbrueckii subsp. bulgaricus (strain ATCC 11842 / DSM 20081 / BCRC 10696 / JCM 1002 / NBRC 13953 / NCIMB 11778 / NCTC 12712 / WDCM 00102 / Lb 14).